The following is a 702-amino-acid chain: Vacuolar protein sorting-associated protein 52 homolog (702 aa).

The stretch at 505–535 (KEMGAKMEAVLENSEDSIEQLLTRMSAMQQT) forms a coiled coil.

The protein belongs to the VPS52 family. As to quaternary structure, component of the Golgi-associated retrograde protein (GARP) complex, also called VFT (VPS fifty-three) complex, composed of vps-51, vps-52, vps-53 and vps-54. Within the complex interacts with vps-53 and vps-54. Interacts with the small GTPases rab-6.1 and rab-6.2. Ubiquitously expressed, with particularly strong expression in neuronal cells. Specifically expressed in head and tail neurons and in the pharynx and ventral cord motor neurons.

Its subcellular location is the golgi apparatus. It is found in the trans-Golgi network. The protein resides in the perikaryon. The protein localises to the cytoplasm. It localises to the perinuclear region. In terms of biological role, acts as a component of the GARP complex that is involved in retrograde transport from early and late endosomes to the trans-Golgi network (TGN). The GARP complex facilitates tethering as well as SNARE complex assembly at the Golgi. Plays a role in the trafficking of cargo to dense-core vesicles, probably through association with the EARP-interacting protein eipr-1. Important for neuronal function. The polypeptide is Vacuolar protein sorting-associated protein 52 homolog (Caenorhabditis elegans).